We begin with the raw amino-acid sequence, 247 residues long: 23S rRNA (guanosine-2'-O-)-methyltransferase RlmB (247 aa).

Residues Gly197, Ile217, and Leu226 each coordinate S-adenosyl-L-methionine.

This sequence belongs to the class IV-like SAM-binding methyltransferase superfamily. RNA methyltransferase TrmH family. RlmB subfamily.

Its subcellular location is the cytoplasm. The enzyme catalyses guanosine(2251) in 23S rRNA + S-adenosyl-L-methionine = 2'-O-methylguanosine(2251) in 23S rRNA + S-adenosyl-L-homocysteine + H(+). Functionally, specifically methylates the ribose of guanosine 2251 in 23S rRNA. This chain is 23S rRNA (guanosine-2'-O-)-methyltransferase RlmB, found in Vibrio vulnificus (strain CMCP6).